The chain runs to 530 residues: Glucose-6-phosphate isomerase (530 aa).

The Proton donor role is filled by E322. Active-site residues include H351 and K455.

It belongs to the GPI family.

It localises to the cytoplasm. It carries out the reaction alpha-D-glucose 6-phosphate = beta-D-fructose 6-phosphate. It functions in the pathway carbohydrate biosynthesis; gluconeogenesis. Its pathway is carbohydrate degradation; glycolysis; D-glyceraldehyde 3-phosphate and glycerone phosphate from D-glucose: step 2/4. Catalyzes the reversible isomerization of glucose-6-phosphate to fructose-6-phosphate. This is Glucose-6-phosphate isomerase from Geobacter sp. (strain M21).